The following is a 156-amino-acid chain: Probable succinate transporter subunit YjjB (156 aa).

The next 4 helical transmembrane spans lie at 7–27 (WALLQDMVLAAIPALGFAMVF), 54–74 (FGMNIELASLVASIMIGVIGI), 86–106 (VFTVAAVIPMFPGISAYTAMI), and 128–148 (FLKASFIVGALSIGLSLPGLW).

The protein belongs to the ThrE exporter (TC 2.A.79) family. The transporter is composed of YjjB and YjjP.

The protein localises to the cell inner membrane. Involved in succinate export with YjjP. Both proteins are required for export. The polypeptide is Probable succinate transporter subunit YjjB (Yersinia pseudotuberculosis serotype I (strain IP32953)).